The primary structure comprises 261 residues: Ribosome biogenesis protein nsa2 (261 aa).

Basic and acidic residues-rich tracts occupy residues 1–36 (MPQN…HKQS) and 66–82 (KQHE…EKDP). Disordered stretches follow at residues 1-44 (MPQN…NLRG) and 64-97 (AIKQ…SNPT). The Nuclear localization signal signature appears at 15-22 (GKRLDTEE).

It belongs to the eukaryotic ribosomal protein eS8 family. Ribosome biogenesis protein NSA2 subfamily. As to quaternary structure, component of the pre-66S ribosomal particle. Interacts with nop7 and rrp1. Interacts with rsa4 (via WD repeats).

Its subcellular location is the nucleus. The protein resides in the nucleolus. In terms of biological role, involved in the biogenesis of the 60S ribosomal subunit. May play a part in the quality control of pre-60S particles. The polypeptide is Ribosome biogenesis protein nsa2 (rbg-52) (Neurospora crassa (strain ATCC 24698 / 74-OR23-1A / CBS 708.71 / DSM 1257 / FGSC 987)).